A 443-amino-acid chain; its full sequence is ATP-dependent protease ATPase subunit HslU (443 aa).

Residues I18, 60–65 (GVGKTE), D256, E321, and R393 each bind ATP.

The protein belongs to the ClpX chaperone family. HslU subfamily. In terms of assembly, a double ring-shaped homohexamer of HslV is capped on each side by a ring-shaped HslU homohexamer. The assembly of the HslU/HslV complex is dependent on binding of ATP.

It localises to the cytoplasm. In terms of biological role, ATPase subunit of a proteasome-like degradation complex; this subunit has chaperone activity. The binding of ATP and its subsequent hydrolysis by HslU are essential for unfolding of protein substrates subsequently hydrolyzed by HslV. HslU recognizes the N-terminal part of its protein substrates and unfolds these before they are guided to HslV for hydrolysis. In Enterobacter sp. (strain 638), this protein is ATP-dependent protease ATPase subunit HslU.